Here is a 427-residue protein sequence, read N- to C-terminus: UPF0761 membrane protein Cphamn1_1013 (427 aa).

6 helical membrane passes run 51 to 71 (LLSLIPLMAVVLSVLSVSPVF), 107 to 127 (TVPTVGGIFLLIIALFLISTI), 147 to 167 (FTLYWTVLTLGPIIIGSGLVA), 188 to 208 (ILSYLPLVNSFLAFFLLYMLV), 218 to 238 (AVSGAFLATWLFELSKQWFSF), and 251 to 271 (GALSVIPLLFFWIYLIWVVAL).

Belongs to the UPF0761 family.

It localises to the cell inner membrane. In Chlorobium phaeobacteroides (strain BS1), this protein is UPF0761 membrane protein Cphamn1_1013.